The following is a 1091-amino-acid chain: Multiple epidermal growth factor-like domains protein 11 (1091 aa).

A signal peptide spans methionine 1–alanine 18. Residues leucine 19–serine 847 lie on the Extracellular side of the membrane. Residues aspartate 23–proline 100 form the EMI domain. Disulfide bonds link cysteine 27–cysteine 88, cysteine 53–cysteine 62, cysteine 87–cysteine 98, cysteine 102–cysteine 117, cysteine 119–cysteine 128, cysteine 145–cysteine 153, cysteine 147–cysteine 160, cysteine 162–cysteine 171, cysteine 184–cysteine 196, cysteine 190–cysteine 203, cysteine 205–cysteine 214, cysteine 227–cysteine 239, cysteine 233–cysteine 246, and cysteine 248–cysteine 257. EGF-like domains lie at asparagine 94 to serine 129, serine 142 to glutamate 172, histidine 180 to glutamate 215, histidine 223 to alanine 258, phenylalanine 266 to glutamine 301, serine 314 to glutamine 344, tyrosine 398 to alanine 433, tyrosine 441 to serine 476, and tryptophan 484 to glutamate 519. N-linked (GlcNAc...) asparagine glycosylation occurs at asparagine 269. Cystine bridges form between cysteine 270–cysteine 282, cysteine 276–cysteine 289, cysteine 291–cysteine 300, cysteine 317–cysteine 325, cysteine 319–cysteine 332, cysteine 334–cysteine 343, cysteine 402–cysteine 414, cysteine 408–cysteine 421, cysteine 423–cysteine 432, cysteine 445–cysteine 457, cysteine 451–cysteine 464, cysteine 466–cysteine 475, cysteine 488–cysteine 500, cysteine 494–cysteine 507, and cysteine 509–cysteine 518. N-linked (GlcNAc...) asparagine glycosylation occurs at asparagine 530. EGF-like domains are found at residues tryptophan 570–glutamine 605, tyrosine 613–asparagine 650, phenylalanine 658–serine 693, phenylalanine 706–threonine 736, glycine 749–glutamate 779, and phenylalanine 787–aspartate 822. Cystine bridges form between cysteine 574–cysteine 586, cysteine 580–cysteine 593, cysteine 595–cysteine 604, cysteine 617–cysteine 631, cysteine 621–cysteine 638, cysteine 640–cysteine 649, cysteine 662–cysteine 674, cysteine 668–cysteine 681, cysteine 683–cysteine 692, cysteine 709–cysteine 717, cysteine 711–cysteine 724, cysteine 726–cysteine 735, cysteine 752–cysteine 760, cysteine 754–cysteine 767, cysteine 769–cysteine 778, cysteine 791–cysteine 803, cysteine 797–cysteine 810, and cysteine 812–cysteine 821. The helical transmembrane segment at valine 848–phenylalanine 868 threads the bilayer. Topologically, residues alanine 869–threonine 1091 are cytoplasmic.

It belongs to the MEGF family. As to quaternary structure, homomer. Does not interact with MEGF10.

The protein resides in the cell membrane. It is found in the basolateral cell membrane. May regulate the mosaic spacing of specific neuron subtypes in the retina through homotypic retinal neuron repulsion. Mosaics provide a mechanism to distribute each cell type evenly across the retina, ensuring that all parts of the visual field have access to a full set of processing elements. This is Multiple epidermal growth factor-like domains protein 11 (Megf11) from Mus musculus (Mouse).